Reading from the N-terminus, the 172-residue chain is Small ribosomal subunit protein uS5 (172 aa).

Residues 11–74 (LSEVLVDVNR…QAAKKRMMKV (64 aa)) enclose the S5 DRBM domain.

Belongs to the universal ribosomal protein uS5 family. In terms of assembly, part of the 30S ribosomal subunit. Contacts proteins S4 and S8.

Functionally, with S4 and S12 plays an important role in translational accuracy. Its function is as follows. Located at the back of the 30S subunit body where it stabilizes the conformation of the head with respect to the body. The polypeptide is Small ribosomal subunit protein uS5 (Rickettsia canadensis (strain McKiel)).